The following is a 1446-amino-acid chain: Centrosomal protein of 164 kDa (1446 aa).

The tract at residues 1–195 (MARRPILLGD…PPQGLKAAAC (195 aa)) is interaction with ATRIP. Positions 56–89 (APLPKGWKPCQNITGDLYYFNFDTGQSIWDHPCD) constitute a WW domain. Disordered stretches follow at residues 106–132 (PGAI…SKSP) and 159–185 (PPSA…EPTL). A compositionally biased stretch (basic residues) spans 109–121 (IKKKDKKKKKEKK). The segment covering 164–176 (RGSQSVSLGSSAD) has biased composition (polar residues). A Phosphoserine modification is found at S202. Disordered stretches follow at residues 217-238 (EETN…SSEL), 250-408 (GGNF…SFLG), 424-570 (GDTL…EPAA), and 830-849 (KRQE…KEEH). The segment covering 218–228 (ETNEEDEEESD) has biased composition (acidic residues). The segment covering 257 to 277 (ESPRTSQPDKKDVSLDSDADR) has biased composition (basic and acidic residues). The span at 288-312 (GADSSVASANGSKSQGRGASPWNPQ) shows a compositional bias: polar residues. Basic and acidic residues-rich tracts occupy residues 355-372 (KEGE…KEAS) and 384-397 (SEIH…RHSG). A compositionally biased stretch (polar residues) spans 451-461 (SSIAEPQSKHT). Basic and acidic residues-rich tracts occupy residues 490 to 499 (PEWKEAEGPG) and 525 to 534 (ERAEEKHSQA). Residues 1143-1197 (EVLGNMRKNLNEETRHLDEMKSAMRKGHDLLKKKEEKLIQLESSLQEEVSDEDTL) are a coiled coil. Positions 1261–1287 (LGSLNSQPPPQGLGSQPPPPLFTSSLR) are disordered. Pro residues predominate over residues 1267-1281 (QPPPQGLGSQPPPPL). 2 positions are modified to phosphoserine: S1369 and S1371.

As to quaternary structure, interacts (via N-terminus) with ATRIP. Interacts with ATM, ATR and MDC1. Interacts with XPA (via N-terminus) upon UV irradiation. Interacts with CEP83, CCDC92, TTBK2, DVL3, NPHP3 and weakly with NPHP4. Interacts with DZIP1.

It is found in the cytoplasm. The protein resides in the cytoskeleton. It localises to the microtubule organizing center. Its subcellular location is the centrosome. The protein localises to the centriole. It is found in the nucleus. Plays a role in microtubule organization and/or maintenance for the formation of primary cilia (PC), a microtubule-based structure that protrudes from the surface of epithelial cells. Plays a critical role in G2/M checkpoint and nuclear divisions. A key player in the DNA damage-activated ATR/ATM signaling cascade since it is required for the proper phosphorylation of H2AX, RPA, CHEK2 and CHEK1. Plays a critical role in chromosome segregation, acting as a mediator required for the maintenance of genomic stability through modulation of MDC1, RPA and CHEK1. The polypeptide is Centrosomal protein of 164 kDa (Mus musculus (Mouse)).